The sequence spans 270 residues: MLNVTNLSFTYPRHSQPALKKLNFSLKPNTHVAIIGHNGSGKSTLVKLLGGFLKAPKQTIFFRGQPLEEVGFRQIGILLQDPDMQLLGDTLHQELIFSLENHGVDPKQMDRVIADVLAVVELQGKQFTPLSKLSFGEKQRAVFACLLAVKPELYLLDEAFSMLDGKLASKLKRFIFKVIKEQQKTVINVTHDFNDLFLADEIIFLSKGQLLKQFSPAAIYKQLHLFHQHHFTLPFPWLLAHEVADHLHHEMKGPIEELQDVVDWICKHLK.

In terms of domain architecture, ABC transporter spans 2–232 (LNVTNLSFTY…LHLFHQHHFT (231 aa)). An ATP-binding site is contributed by 36–43 (GHNGSGKS).

Belongs to the ABC transporter superfamily.

The sequence is that of Putative ABC transporter ATP-binding protein MG304 homolog from Mycoplasma pneumoniae (strain ATCC 29342 / M129 / Subtype 1) (Mycoplasmoides pneumoniae).